The chain runs to 255 residues: Aprataxin and PNK-like factor (255 aa).

Positions 1 to 11 (MSATDASTADS) are enriched in low complexity. Disordered regions lie at residues 1-117 (MSAT…VSSS), 131-168 (RRNP…FGNA), and 195-255 (RLRQ…DDYD). Composition is skewed to basic and acidic residues over residues 12-22 (GAKRKSSEDIT), 40-64 (KSEE…KAEP), and 137-150 (RSAE…DYRR). PBZ-type zinc fingers lie at residues 121–142 (TSCR…AEAH) and 161–182 (PACP…DYSH). Positions 207–218 (DDSGTDEEDEPF) are enriched in acidic residues. A compositionally biased stretch (basic and acidic residues) spans 221 to 230 (DNDRDADYRP). The segment covering 234 to 244 (INEDEDDELEF) has biased composition (acidic residues).

The protein belongs to the APLF family.

Displays apurinic-apyrimidinic (AP) endonuclease and 3'-5' exonuclease activities in vitro. The sequence is that of Aprataxin and PNK-like factor from Drosophila melanogaster (Fruit fly).